A 217-amino-acid polypeptide reads, in one-letter code: Small ribosomal subunit protein uS3c (217 aa).

The 72-residue stretch at 47–118 (IQKHVKSVSN…NLRVTLTGVI (72 aa)) folds into the KH type-2 domain.

This sequence belongs to the universal ribosomal protein uS3 family. In terms of assembly, part of the 30S ribosomal subunit.

The protein localises to the plastid. It localises to the chloroplast. This Adiantum capillus-veneris (Maidenhair fern) protein is Small ribosomal subunit protein uS3c (rps3).